Reading from the N-terminus, the 374-residue chain is 4-hydroxybenzoate polyprenyltransferase, mitochondrial (374 aa).

A mitochondrion-targeting transit peptide spans 1-63; it reads MLRLGGAGLV…RALSLSAAAV (63 aa). Over 64 to 83 the chain is Mitochondrial matrix; that stretch reads VNSAPRPLQPYLRLMRLDKP. A helical transmembrane segment spans residues 84-104; the sequence is IGTWLLYLPCTWSIGLAADPG. Over 105-108 the chain is Mitochondrial intermembrane; it reads CFPD. Residues 109–129 traverse the membrane as a helical segment; the sequence is WYMLSLFGTGAILMRGAGCTI. At 130–153 the chain is on the mitochondrial matrix side; sequence NDMWDRDFDKKVERTANRPIAAGD. The chain crosses the membrane as a helical span at residues 154–174; that stretch reads ISAFQSFVFLGAQLTLALGVL. The Mitochondrial intermembrane portion of the chain corresponds to 175–176; the sequence is LH. Residues 177–197 form a helical membrane-spanning segment; sequence LNYYSIAMGAASLLLVVTYPL. Over 198-200 the chain is Mitochondrial matrix; sequence MKR. The helical transmembrane segment at 201–221 threads the bilayer; the sequence is VTFWPQLALGLTFNWGALLGW. The Mitochondrial intermembrane portion of the chain corresponds to 222 to 230; sequence SAVKGSCDP. The helical transmembrane segment at 231–251 threads the bilayer; sequence AVCLPLYFSGVMWTLIYDTIY. Residues 252 to 277 lie on the Mitochondrial matrix side of the membrane; that stretch reads AHQDKKDDALIGLKSTALLFRENTKQ. A helical transmembrane segment spans residues 278–298; it reads WLSGFGVAMVGALSLVGASSG. The Mitochondrial intermembrane portion of the chain corresponds to 299–300; it reads QT. Residues 301–321 form a helical membrane-spanning segment; the sequence is LPYYAAVAAVGAHLAHQIYTV. The Mitochondrial matrix portion of the chain corresponds to 322–332; sequence DIHRAEDCWEK. Residues 333–353 form a helical membrane-spanning segment; the sequence is FTSNRTVGLLLFLGIVLGNLY. The Mitochondrial intermembrane segment spans residues 354–374; sequence KDKPDETKGVDAVGEESERTS.

The protein belongs to the UbiA prenyltransferase family. Mg(2+) is required as a cofactor.

It localises to the mitochondrion inner membrane. The enzyme catalyses an all-trans-polyprenyl diphosphate + 4-hydroxybenzoate = a 4-hydroxy-3-(all-trans-polyprenyl)benzoate + diphosphate. The catalysed reaction is all-trans-decaprenyl diphosphate + 4-hydroxybenzoate = 4-hydroxy-3-(all-trans-decaprenyl)benzoate + diphosphate. It catalyses the reaction all-trans-nonaprenyl diphosphate + 4-hydroxybenzoate = 4-hydroxy-3-(all-trans-nonaprenyl)benzoate + diphosphate. It functions in the pathway cofactor biosynthesis; ubiquinone biosynthesis. Its function is as follows. Mediates the second step in the final reaction sequence of coenzyme Q (CoQ) biosynthesis. Catalyzes the prenylation of para-hydroxybenzoate (PHB) with an all-trans polyprenyl group (such as all-trans-nonaprenyl diphosphate). The length of the polyprenyl side chain varies depending on the species, in humans, the side chain is comprised of 10 isoprenyls producing CoQ10 (also known as ubiquinone), whereas rodents predominantly generate CoQ9. However, this specificity is not complete, human tissues have low amounts of CoQ9 and rodent organs contain some CoQ10. Plays a central role in the biosynthesis of CoQ9. CoQ9 is a vital molecule that transports electrons from mitochondrial respiratory chain complexes. CoQs also function as cofactors for uncoupling protein and plays a role as regulator of the extracellularly-induced ceramide-dependent apoptotic pathway. Regulates mitochondrial permeability transition pore (mPTP) opening and ROS production (pivotal events in cell death) in a tissue specific manner. This is 4-hydroxybenzoate polyprenyltransferase, mitochondrial from Rattus norvegicus (Rat).